A 207-amino-acid chain; its full sequence is Small ribosomal subunit protein uS4 (207 aa).

The disordered stretch occupies residues 31 to 55; that stretch reads KCKLDSKPGQHGRTSGARTSDYGTQ. Residues 42 to 53 show a composition bias toward polar residues; the sequence is GRTSGARTSDYG. The region spanning 97–160 is the S4 RNA-binding domain; the sequence is SRLDNVVYRM…KKQARIVEAL (64 aa).

This sequence belongs to the universal ribosomal protein uS4 family. Part of the 30S ribosomal subunit. Contacts protein S5. The interaction surface between S4 and S5 is involved in control of translational fidelity.

One of the primary rRNA binding proteins, it binds directly to 16S rRNA where it nucleates assembly of the body of the 30S subunit. Functionally, with S5 and S12 plays an important role in translational accuracy. The polypeptide is Small ribosomal subunit protein uS4 (Burkholderia ambifaria (strain ATCC BAA-244 / DSM 16087 / CCUG 44356 / LMG 19182 / AMMD) (Burkholderia cepacia (strain AMMD))).